The chain runs to 420 residues: Tryptophan synthase beta chain (420 aa).

Position 99 is an N6-(pyridoxal phosphate)lysine (lysine 99).

This sequence belongs to the TrpB family. In terms of assembly, tetramer of two alpha and two beta chains. Pyridoxal 5'-phosphate serves as cofactor.

It catalyses the reaction (1S,2R)-1-C-(indol-3-yl)glycerol 3-phosphate + L-serine = D-glyceraldehyde 3-phosphate + L-tryptophan + H2O. Its pathway is amino-acid biosynthesis; L-tryptophan biosynthesis; L-tryptophan from chorismate: step 5/5. Its function is as follows. The beta subunit is responsible for the synthesis of L-tryptophan from indole and L-serine. This Helicobacter hepaticus (strain ATCC 51449 / 3B1) protein is Tryptophan synthase beta chain.